A 238-amino-acid polypeptide reads, in one-letter code: Small ribosomal subunit protein uS2c (238 aa).

The protein belongs to the universal ribosomal protein uS2 family.

It localises to the plastid. Its subcellular location is the chloroplast. In Jasminum nudiflorum (Winter jasmine), this protein is Small ribosomal subunit protein uS2c (rps2).